Here is a 103-residue protein sequence, read N- to C-terminus: Large ribosomal subunit protein bL21 (103 aa).

The protein belongs to the bacterial ribosomal protein bL21 family. As to quaternary structure, part of the 50S ribosomal subunit. Contacts protein L20.

Functionally, this protein binds to 23S rRNA in the presence of protein L20. In Clostridium acetobutylicum (strain ATCC 824 / DSM 792 / JCM 1419 / IAM 19013 / LMG 5710 / NBRC 13948 / NRRL B-527 / VKM B-1787 / 2291 / W), this protein is Large ribosomal subunit protein bL21.